Here is a 750-residue protein sequence, read N- to C-terminus: Elastin (750 aa).

The first 24 residues, 1 to 24 (ARQAAAPLLPGVLLLFSILPASQQ), serve as a signal peptide directing secretion. P32, P67, P102, P176, P189, P192, and P211 each carry 4-hydroxyproline. Copy 1 of the repeat occupies 83–127 (GAGVGGLGAGLGAFPGAAFPGAASAAALKAAAKAGAGLGGVGGIG). The 8 X tandem repeats stretch occupies residues 83 to 686 (GAGVGGLGAG…GVGGLGVGGL (604 aa)). Repeat copies occupy residues 219 to 262 (VNGL…AGVL), 263 to 318 (PGAG…GVPG), 319 to 393 (VVPG…VPGV), 394 to 482 (PGVP…VPGV), 483 to 554 (GVPG…VGGL), 555 to 619 (VPGV…PGVT), and 620 to 686 (PGVG…VGGL). 7 positions are modified to 4-hydroxyproline: P276, P345, P363, P368, P441, P455, and P480. 3 positions are modified to 4-hydroxyproline: P576, P635, and P720. A disulfide bond links C739 and C745.

This sequence belongs to the elastin family. The polymeric elastin chains are cross-linked together into an extensible 3D network. In terms of processing, elastin is formed through the cross-linking of its soluble precursor tropoelastin. Cross-linking is initiated through the action of lysyl oxidase on exposed lysines to form allysine. Subsequent spontaneous condensation reactions with other allysine or unmodified lysine residues result in various bi-, tri-, and tetrafunctional cross-links. The most abundant cross-links in mature elastin fibers are lysinonorleucine, allysine aldol, desmosine, and isodesmosine. Post-translationally, hydroxylated on proline residues. Hydroxylation on proline residues within the sequence motif, GXPG, is most likely to be 4-hydroxy as this fits the requirement for 4-hydroxylation in vertebrates.

It localises to the secreted. Its subcellular location is the extracellular space. The protein resides in the extracellular matrix. In terms of biological role, major structural protein of tissues such as aorta and nuchal ligament, which must expand rapidly and recover completely. This is Elastin (ELN) from Gallus gallus (Chicken).